Consider the following 127-residue polypeptide: uncharacterized protein (127 aa).

4 helical membrane-spanning segments follow: residues 1–21 (MYIIMGVFTTIVNIASFYILV), 32–52 (TVAAWILSVLFAYITNKLYVF), 68–88 (AFFSVRVLSLGIDLGMMIILV), and 100–120 (ILDNAVIVVVNYVASKWLVFK).

The protein belongs to the GtrA family.

It localises to the cell membrane. This is an uncharacterized protein from Bacillus subtilis (strain 168).